A 64-amino-acid polypeptide reads, in one-letter code: Large ribosomal subunit protein bL35 (64 aa).

Positions 1-28 are enriched in basic residues; it reads MSKAKTHSGAAKRFKKTASGYKHKHAFK. Residues 1–51 are disordered; the sequence is MSKAKTHSGAAKRFKKTASGYKHKHAFKSHILTKMTTKRKRQLRGTSLLNA.

The protein belongs to the bacterial ribosomal protein bL35 family.

The chain is Large ribosomal subunit protein bL35 from Saccharophagus degradans (strain 2-40 / ATCC 43961 / DSM 17024).